The chain runs to 2298 residues: Non-reducing polyketide synthase pgmA (2298 aa).

Residues L8–L333 are N-terminal acylcarrier protein transacylase domain (SAT). The segment at Y336–Q361 is disordered. The segment covering K340–S349 has biased composition (polar residues). Residues R360–D798 form the Ketosynthase family 3 (KS3) domain. Residues C532, H667, and H714 each act as for beta-ketoacyl synthase activity in the active site. An acyl/malonyl transferases region spans residues V901–Q1193. Catalysis depends on S994, which acts as the For acyl/malonyl transferase activity. The interval H1283 to L1415 is N-terminal hotdog fold. Positions H1283–K1589 constitute a PKS/mFAS DH domain. A product template (PT) domainn region spans residues K1294 to R1586. Residue H1315 is the Proton acceptor; for dehydratase activity of the active site. Residues V1438–K1589 are C-terminal hotdog fold. D1502 acts as the Proton donor; for dehydratase activity in catalysis. The disordered stretch occupies residues Y1619–S1642. One can recognise a Carrier 1 domain in the interval P1641–E1716. S1675 is modified (O-(pantetheine 4'-phosphoryl)serine). The interval E1716–D1762 is disordered. A compositionally biased stretch (polar residues) spans G1751 to L1760. Positions K1765–D1840 constitute a Carrier 2 domain. S1799 is subject to O-(pantetheine 4'-phosphoryl)serine. The segment at V1927 to G2178 is reductase (R) domain.

Its pathway is pigment biosynthesis. It participates in secondary metabolite biosynthesis. In terms of biological role, non-reducing polyketide synthase; part of the gene cluster that mediates the biosynthesis of pleosporalin A, ascomycone A, as well as a third cryptic naphthoquinone derived pigment, all responsible for the coloration of conidia. The non-reducing polyketide synthase pgmA is responsible for the condensation of seven acetyl-CoA units to produce the cyclized heptaketide 3-acetonyl-1,6,8-trihydroxy-2-naphthaldehyde. The pathway begins with the biosynthesis of the cyclized heptaketide 3-acetonyl-1,6,8-trihydroxy-2-naphthaldehyde by the NR-PKS pgmA. The C-6 hydroxyl group is further methylated by the O-methyltransferase pgmB to yield fusarubinaldehyde which is in turn oxidized by the cytochrome P450 monooxygenase pgmC at C-9. The C-1 hydroxyl group is then methylated spontaneously. Although pgmE, pgmD and pgmH are essential for the production of pleosporalin A, it is not the case for the 2 other final products and it remains difficult to assign a specific function to each enzyme. PgmF and pgmG seem not to be involved in pigment biosynthesis although they were regulated by the cluster-specific transcription factor pgmR. The polypeptide is Non-reducing polyketide synthase pgmA (Aspergillus terreus (strain NIH 2624 / FGSC A1156)).